The primary structure comprises 43 residues: uncharacterized protein (43 aa).

A helical transmembrane segment spans residues 21-41; that stretch reads SSFALIVVLFILLIIVGAAIF.

The protein belongs to the SscA family.

It localises to the membrane. This is an uncharacterized protein from Bacillus subtilis (strain 168).